Here is a 1580-residue protein sequence, read N- to C-terminus: Collagen alpha-1(XVI) chain (1580 aa).

Residues 1-21 (MLTSWAPGLWVLGLWATFSHG) form the signal peptide. An N-linked (GlcNAc...) asparagine glycan is attached at Asn-47. Residues 50-231 (GFNLIRRLNL…LQQAHIYCDP (182 aa)) form the Laminin G-like domain. Residues 232 to 374 (ELVLEEGCCE…SPDAPLQCVE (143 aa)) form a nonhelical region 10 (NC10) region. The segment at 324–547 (RESNVTLGPS…DPAPAWEGLG (224 aa)) is disordered. Asn-327 is a glycosylation site (N-linked (GlcNAc...) asparagine). The Collagen-like 1 domain maps to 375 to 424 (GPKGEKGESGDLGPPGLPGPTGQKGQKGEKGDGGLKGLPGKPGRDGRPGE). The interval 375–509 (GPKGEKGESG…PGTKGEKGDP (135 aa)) is triple-helical region 9 (COL9) with 3 imperfections. Positions 449–460 (PGPPGLPGPPGI) are enriched in pro residues. Residues 486–495 (GKEGPGGKPG) show a composition bias toward gly residues. The tract at residues 510–524 (CEVCPTLPEGSQNFV) is nonhelical region 9 (NC9). The tract at residues 525–570 (GLPGKPGPKGEPGDPAPAWEGLGTVGLKGDRGDPGIQGMKGEKGEP) is triple-helical region 8 (COL8) with 1 imperfection. The short motif at 555-557 (RGD) is the Cell attachment site element. Positions 571 to 586 (CSSCSSGVGAQHLGPS) are nonhelical region 8 (NC8). Over residues 585–598 (PSPGHGLPGLPGTS) the composition is skewed to low complexity. The interval 585–935 (PSPGHGLPGL…LPGQPGLTAE (351 aa)) is disordered. The interval 587–640 (PGHGLPGLPGTSGIPGPRGLKGEKGSFGDTGPAGVPGSPGPVGPAGIKGAKGEP) is triple-helical region 7 (COL7) with 1 imperfection. 2 Collagen-like domains span residues 590 to 643 (GLPG…PCEP) and 676 to 725 (GLPG…PAGP). The nonhelical region 7 (NC7) stretch occupies residues 641–661 (CEPCTALSELQDGDMRVVHLP). Positions 662-732 (GPAGEKGEPG…AGPKGEKGDG (71 aa)) are triple-helical region 6 (COL6) with 1 imperfection. A compositionally biased stretch (basic and acidic residues) spans 683–693 (KAGERGLKGQK). Low complexity predominate over residues 698–714 (NPGDPGTPGITGQPGIS). The nonhelical region 6 (NC6) stretch occupies residues 733–747 (CTACPSLQGALTDVS). The triple-helical region 5 (COL5) with 3 imperfections stretch occupies residues 748-870 (GLPGKPGPKG…RGEKGEPGEC (123 aa)). One can recognise a Collagen-like 4 domain in the interval 797–848 (GAEGPQGEPGTQGLPGTQGLPGPRGPPGSAGEKGAQGSPGPKGAIGPMGPPG). The segment covering 801–817 (PQGEPGTQGLPGTQGLP) has biased composition (low complexity). Residues 871 to 881 (SCPSRGEPIFS) are nonhelical region 5 (NC5). The triple-helical region 4 (COL4) with 2 imperfections stretch occupies residues 882–933 (GMPGAPGLWMGSSSQPGPQGPPGVPGPPGPPGMPGLQGVPGHNGLPGQPGLT). Pro residues predominate over residues 899–914 (PQGPPGVPGPPGPPGM). Positions 934–967 (AELGSLPIEKHLLKSICGDCAQGQTAHPAFLLEK) are nonhelical region 4 (NC4). The tract at residues 968-982 (GEKGDQGIPGVPGFD) is triple-helical region 3 (COL3). The tract at residues 983 to 1005 (NCARCFIERERPRAEEARGDNSE) is nonhelical region 3 (NC3). Disordered stretches follow at residues 995 to 1405 (RAEE…LPGS) and 1445 to 1523 (AAAP…GYGK). Residues 1000–1002 (RGD) carry the Cell attachment site motif. Positions 1006–1063 (GEPGCSGSPGLPGPPGMPGQRGEEGPPGMRGSPGPPGPIGLQGERGLTGLTGDKGEPG) constitute a Collagen-like 5 domain. The tract at residues 1006–1409 (GEPGCSGSPG…PGLPGSMGDM (404 aa)) is triple-helical region 2 (COL2) with 2 imperfections. Residues 1098-1107 (SGPPGSEGLP) show a composition bias toward low complexity. 2 stretches are compositionally biased toward pro residues: residues 1139-1148 (FPGPPGPPGF) and 1178-1187 (SPGPPGPPGI). Basic and acidic residues predominate over residues 1196 to 1205 (LDGKDGKPGL). The Cell attachment site motif lies at 1206–1208 (RGD). Residues 1210-1263 (GPAGPPGLMGPPGFKGKTGHPGLPGPKGDCGKPGPPGSSGRPGAEGEPGAMGPQ) enclose the Collagen-like 6 domain. The span at 1247–1263 (SSGRPGAEGEPGAMGPQ) shows a compositional bias: low complexity. Residues 1265 to 1281 (RPGPPGHLGPPGQPGPP) show a composition bias toward pro residues. 3 consecutive Collagen-like domains span residues 1350–1407 (GQKG…GSMG), 1448–1500 (PGRP…GDIG), and 1504–1552 (AGEN…GKAG). A compositionally biased stretch (gly residues) spans 1362-1371 (GMPGGPGKSG). A compositionally biased stretch (low complexity) spans 1396-1405 (NPGLPGLPGS). The nonhelical region 2 (NC2) stretch occupies residues 1410–1448 (VNYDDIKRFIRQEIIKLFDERMAYYTSRMQFPMEVAAAP). The segment at 1449–1554 (GRPGPPGKDG…MGQPGKAGHC (106 aa)) is triple-helical region 1 (COL1) with 2 imperfections. The tract at residues 1555-1580 (NPSDCFGAMPMEQQYPPMKSMKGPFG) is nonhelical region 1 (NC1).

This sequence belongs to the fibril-associated collagens with interrupted helices (FACIT) family. As to quaternary structure, homotrimer. Interacts with FBN1, fibronectin and integrins ITGA1/ITGB1 and ITGA2/ITGB1. Integrin ITGA1/ITGB1 binds to a unique site within COL16A1 located close to its C-terminal end between collagenous domains COL1-COL3. Prolines at the third position of the tripeptide repeating unit (G-X-Y) are hydroxylated in some or all of the chains. In terms of processing, glycosylated. In terms of tissue distribution, expressed in most tissues examined with highest levels of expression observed in heart. Strongly expressed in cortical and medullar regions of kidney and more weakly expressed in lung. Also detected in the ciliary muscle of the eye, on the serosa layer lining the muscularis externa of intestinal tissue, and in the perimysium membrane lining both the cardiac muscle bundle and the smooth muscle tissue of the small intestine. Strongly stained in particulate or granular structures. Not detected in brain or skeletal muscle.

It localises to the secreted. It is found in the extracellular space. Its subcellular location is the extracellular matrix. Its function is as follows. Involved in mediating cell attachment and inducing integrin-mediated cellular reactions, such as cell spreading and alterations in cell morphology. The chain is Collagen alpha-1(XVI) chain from Mus musculus (Mouse).